The chain runs to 177 residues: CASP-like protein 5A2 (177 aa).

The Cytoplasmic portion of the chain corresponds to 1 to 36; that stretch reads MNASHPAVHPVGVPPAVAGQLPPRMRMKEIQGMPGT. Residues 37–57 form a helical membrane-spanning segment; sequence IGGLLLRLGQFCFALVAFSIM. At 58–68 the chain is on the extracellular side; that stretch reads VSIENFSTVTA. Asn-62 is a glycosylation site (N-linked (GlcNAc...) asparagine). Residues 69–89 form a helical membrane-spanning segment; that stretch reads FCYLVAATVLQCLWSLALAII. The Cytoplasmic portion of the chain corresponds to 90–103; the sequence is DGYALLVKRSLRNS. A helical membrane pass occupies residues 104–124; the sequence is LLVSLLVVGDGVTATLTFAAA. Over 125–153 the chain is Extracellular; it reads CASAGITVLIGNDLRQCKENHCARYETAT. A helical transmembrane segment spans residues 154–174; it reads ALAFLSWFMVSLSFILTFWLL. Over 175–177 the chain is Cytoplasmic; sequence ATR.

It belongs to the Casparian strip membrane proteins (CASP) family. In terms of assembly, homodimer and heterodimers.

The protein resides in the cell membrane. The protein is CASP-like protein 5A2 of Ginkgo biloba (Ginkgo).